The primary structure comprises 158 residues: NADH-quinone oxidoreductase subunit B (158 aa).

Positions 37, 38, 102, and 132 each coordinate [4Fe-4S] cluster.

The protein belongs to the complex I 20 kDa subunit family. NDH-1 is composed of 14 different subunits. Subunits NuoB, C, D, E, F, and G constitute the peripheral sector of the complex. Requires [4Fe-4S] cluster as cofactor.

The protein localises to the cell inner membrane. The enzyme catalyses a quinone + NADH + 5 H(+)(in) = a quinol + NAD(+) + 4 H(+)(out). NDH-1 shuttles electrons from NADH, via FMN and iron-sulfur (Fe-S) centers, to quinones in the respiratory chain. Couples the redox reaction to proton translocation (for every two electrons transferred, four hydrogen ions are translocated across the cytoplasmic membrane), and thus conserves the redox energy in a proton gradient. In Legionella pneumophila (strain Corby), this protein is NADH-quinone oxidoreductase subunit B.